Consider the following 732-residue polypeptide: MRHVLSLVYKCSVFSKQVTVFSNHLRLSHSQQWGSNKLHRKIKIPNPFREIIMADPKIEEILAPLRANVKEQGDLVRKLKEEKAPEIDIKKAVAELKTRKKILEDKELSLAPAEDLFDRAKMEDLIKRRFFYDQSFAIYGGITGQFDFGPMGCALKSNMIHLWKKFFILQEQMLEVECSILTPEPVLKASGHVERFADLMTKDIKTGECFRLDHLIKGHLEKIKSDKNTKIELKAEIEDILIKLDGMNADEMSALMKRFEMKSPISGNDLTPPIEFNLMFNTQIGPSGLVKGFLRPETAQGIFVNFKRLLEFNQGRLPFAAAQIGNSFRNEISPRSGLLRVREFTMCEIEHFCDVKEHPKFESVKNTQSLLYSADNQEQGKPADLTTIGDAVCKGIVNNETLGYFMARIHMYMLAVGIDPKRLRFRQHMGNEMAHYACDCWDAECLSSYGWIECVGCADRSAYDLTQHTKATGIRLAAEKKLPAPKQIEVVEAIANNGRIGKAFKKDSQAINDTLATLDNAALEEMQKELDSNGEYTLITARGEFKLTPSLVNVKKTQKTIHVEEIIPSVIEPSFGVGRILYCILEHNFRMREGDEQRTYFSLPPTVAPMKCVVLPLSGNAEFQPFVRDLSQELITVDVSHKVDDSSGSIGRRYARTDELGVPYAVTVDFDTIKEPHTVTLRERDSMRQVRLPMADVPTVVRDLSNSKILWSDVEQKYPKFEQQETVKGTSV.

Residues 1-27 (MRHVLSLVYKCSVFSKQVTVFSNHLRL) constitute a mitochondrion transit peptide. One can recognise a WHEP-TRS domain in the interval 61–117 (ILAPLRANVKEQGDLVRKLKEEKAPEIDIKKAVAELKTRKKILEDKELSLAPAEDLF). Glu-297 is a binding site for glycine. ATP contacts are provided by residues 329–331 (RNE) and 340–341 (RV). Glu-348 contributes to the glycine binding site. An ATP-binding site is contributed by 453 to 454 (EC). 572-574 (EPS) contacts glycine. ATP is bound at residue Arg-579.

It belongs to the class-II aminoacyl-tRNA synthetase family. In terms of assembly, homodimer.

It is found in the mitochondrion. The protein localises to the cytoplasm. It localises to the cell projection. The protein resides in the axon. It carries out the reaction tRNA(Gly) + glycine + ATP = glycyl-tRNA(Gly) + AMP + diphosphate. It catalyses the reaction 2 ATP + H(+) = P(1),P(4)-bis(5'-adenosyl) tetraphosphate + diphosphate. Catalyzes the ATP-dependent ligation of glycine to the 3'-end of its cognate tRNA, via the formation of an aminoacyl-adenylate intermediate (Gly-AMP). Also produces diadenosine tetraphosphate (Ap4A), a universal pleiotropic signaling molecule needed for cell regulation pathways, by direct condensation of 2 ATPs. Thereby, may play a special role in Ap4A homeostasis. Required for terminal arborization of both dendrites and axons during development. The chain is Glycine--tRNA ligase from Bombyx mori (Silk moth).